The following is a 282-amino-acid chain: MGRQPCCDKVGLKKGPWTAEEDRKLINFILTNGQCCWRAVPKLSGLLRCGKSCRLRWTNYLRPDLKRGLLSDYEEKMVIDLHSQLGNRWSKIASHLPGRTDNEIKNHWNTHIKKKLRKMGIDPLTHKPLSIVEKEDEEPLKKLQNNTVPFQETMERPLENNIKNISRLEESLGDDQFMEINLEYGVEDVPLIETESLDLICSNSTMSSSTSTSSHSSNDSSFLKDLQFPEFEWSDYGNSNNDNNNGVDNIIENNMMSLWEISDFSSLDLLLNDESSSTFGLF.

HTH myb-type domains are found at residues 9-61 (KVGL…TNYL) and 62-116 (RPDL…KKKL). 2 consecutive DNA-binding regions (H-T-H motif) follow at residues 37–61 (WRAV…TNYL) and 89–112 (WSKI…NTHI).

Expressed in chalaza of mature seeds, cotyledons, rosette leaves, cauline leaves, veins of stems, mature siliques, sepals and styles. Expressed at low levels in roots.

Its subcellular location is the nucleus. In terms of biological role, transcription factor that acts as a positive regulator of abscisic acid (ABA) signaling in response to salt stress. Acts as a negative regulator ABI1, ABI2 and PP2CA, which are protein phosphatases 2C acting as negative regulator of ABA signaling. Binds to the DNA specific sequence and core element 5'-ACGT-3' found in the promoters of ABI1 and PP2CA to negatively regulate their expression during ABA-dependent salt stress response. This Arabidopsis thaliana (Mouse-ear cress) protein is Transcription factor MYB20.